The chain runs to 95 residues: Small ribosomal subunit protein mS37 (95 aa).

The 43-residue stretch at 27 to 69 (ANRCLVLMSNLLQCWSSNGHMNPVCEKLATDLKACTSQNVMGS) folds into the CHCH domain. Short sequence motifs (cx9C motif) lie at residues 30-40 (CLVLMSNLLQC) and 51-61 (CEKLATDLKAC). Cystine bridges form between cysteine 30–cysteine 61 and cysteine 40–cysteine 51.

The protein belongs to the mitochondrion-specific ribosomal protein mS37 family. As to quaternary structure, component of the mitochondrial small ribosomal subunit.

It is found in the mitochondrion. Involved in mitochondrial genome encoded proteins translation. In Eremothecium gossypii (strain ATCC 10895 / CBS 109.51 / FGSC 9923 / NRRL Y-1056) (Yeast), this protein is Small ribosomal subunit protein mS37 (MRP10).